We begin with the raw amino-acid sequence, 245 residues long: Phycocyanobilin:ferredoxin oxidoreductase (245 aa).

This sequence belongs to the HY2 family.

The catalysed reaction is (2R,3Z)-phycocyanobilin + 4 oxidized [2Fe-2S]-[ferredoxin] = biliverdin IXalpha + 4 reduced [2Fe-2S]-[ferredoxin] + 4 H(+). In terms of biological role, catalyzes the four-electron reduction of biliverdin IX-alpha (2-electron reduction at both the A and D rings); the reaction proceeds via an isolatable 2-electron intermediate, 181,182-dihydrobiliverdin. The protein is Phycocyanobilin:ferredoxin oxidoreductase of Microcystis aeruginosa (strain NIES-843 / IAM M-2473).